We begin with the raw amino-acid sequence, 388 residues long: Succinate--CoA ligase [ADP-forming] subunit beta (388 aa).

The ATP-grasp domain occupies 9–244 (KQLFARYGMP…KSQEDEREAQ (236 aa)). Residues lysine 46, 53–55 (GRG), glutamate 99, threonine 102, and glutamate 107 contribute to the ATP site. Residues asparagine 199 and aspartate 213 each contribute to the Mg(2+) site. Substrate contacts are provided by residues asparagine 264 and 321-323 (GIV).

Belongs to the succinate/malate CoA ligase beta subunit family. Heterotetramer of two alpha and two beta subunits. Requires Mg(2+) as cofactor.

It catalyses the reaction succinate + ATP + CoA = succinyl-CoA + ADP + phosphate. The enzyme catalyses GTP + succinate + CoA = succinyl-CoA + GDP + phosphate. It participates in carbohydrate metabolism; tricarboxylic acid cycle; succinate from succinyl-CoA (ligase route): step 1/1. In terms of biological role, succinyl-CoA synthetase functions in the citric acid cycle (TCA), coupling the hydrolysis of succinyl-CoA to the synthesis of either ATP or GTP and thus represents the only step of substrate-level phosphorylation in the TCA. The beta subunit provides nucleotide specificity of the enzyme and binds the substrate succinate, while the binding sites for coenzyme A and phosphate are found in the alpha subunit. The sequence is that of Succinate--CoA ligase [ADP-forming] subunit beta from Yersinia enterocolitica serotype O:8 / biotype 1B (strain NCTC 13174 / 8081).